The primary structure comprises 335 residues: Glyceraldehyde-3-phosphate dehydrogenase (335 aa).

NAD(+) is bound by residues 13-14 (TI) and glycine 111. 140 to 142 (SCN) contacts D-glyceraldehyde 3-phosphate. Cysteine 141 functions as the Nucleophile in the catalytic mechanism. An NAD(+)-binding site is contributed by arginine 169. 195–196 (HG) lines the D-glyceraldehyde 3-phosphate pocket. Glutamine 300 is a binding site for NAD(+).

The protein belongs to the glyceraldehyde-3-phosphate dehydrogenase family. In terms of assembly, homotetramer.

The protein localises to the cytoplasm. It catalyses the reaction D-glyceraldehyde 3-phosphate + phosphate + NADP(+) = (2R)-3-phospho-glyceroyl phosphate + NADPH + H(+). The catalysed reaction is D-glyceraldehyde 3-phosphate + phosphate + NAD(+) = (2R)-3-phospho-glyceroyl phosphate + NADH + H(+). It functions in the pathway carbohydrate degradation; glycolysis; pyruvate from D-glyceraldehyde 3-phosphate: step 1/5. The protein is Glyceraldehyde-3-phosphate dehydrogenase of Methanococcoides burtonii (strain DSM 6242 / NBRC 107633 / OCM 468 / ACE-M).